A 317-amino-acid chain; its full sequence is Small ribosomal subunit biogenesis GTPase RsgA (317 aa).

Residues 88 to 249 (DQYKSKLFAA…LIDSPGFQEF (162 aa)) enclose the CP-type G domain. Residues 136–139 (NKID) and 190–198 (GQSGMGKST) contribute to the GTP site. Residues C273, C278, H280, and C286 each contribute to the Zn(2+) site.

It belongs to the TRAFAC class YlqF/YawG GTPase family. RsgA subfamily. Monomer. Associates with 30S ribosomal subunit, binds 16S rRNA. Zn(2+) is required as a cofactor.

It is found in the cytoplasm. One of several proteins that assist in the late maturation steps of the functional core of the 30S ribosomal subunit. Helps release RbfA from mature subunits. May play a role in the assembly of ribosomal proteins into the subunit. Circularly permuted GTPase that catalyzes slow GTP hydrolysis, GTPase activity is stimulated by the 30S ribosomal subunit. This is Small ribosomal subunit biogenesis GTPase RsgA from Paraburkholderia phymatum (strain DSM 17167 / CIP 108236 / LMG 21445 / STM815) (Burkholderia phymatum).